A 72-amino-acid polypeptide reads, in one-letter code: Cell division protein ZapB (72 aa).

Residues 1 to 71 (MSLEILDQLE…LRSLLGRIDN (71 aa)) adopt a coiled-coil conformation. The interval 36-56 (LSRQTNEQLRSENEHLKTEHH) is disordered. Over residues 44–56 (LRSENEHLKTEHH) the composition is skewed to basic and acidic residues.

Belongs to the ZapB family. In terms of assembly, homodimer. The ends of the coiled-coil dimer bind to each other, forming polymers. Interacts with FtsZ.

It localises to the cytoplasm. In terms of biological role, non-essential, abundant cell division factor that is required for proper Z-ring formation. It is recruited early to the divisome by direct interaction with FtsZ, stimulating Z-ring assembly and thereby promoting cell division earlier in the cell cycle. Its recruitment to the Z-ring requires functional FtsA or ZipA. The chain is Cell division protein ZapB from Histophilus somni (strain 129Pt) (Haemophilus somnus).